The primary structure comprises 207 residues: Cytochrome c biogenesis ATP-binding export protein CcmA 1 (207 aa).

The ABC transporter domain maps to 6–207; sequence LEALDLAGVR…KTSQTVRMGA (202 aa). 38 to 45 is an ATP binding site; the sequence is GENGSGKT.

Belongs to the ABC transporter superfamily. CcmA exporter (TC 3.A.1.107) family. The complex is composed of two ATP-binding proteins (CcmA) and two transmembrane proteins (CcmB).

The protein resides in the cell inner membrane. It carries out the reaction heme b(in) + ATP + H2O = heme b(out) + ADP + phosphate + H(+). In terms of biological role, part of the ABC transporter complex CcmAB involved in the biogenesis of c-type cytochromes; once thought to export heme, this seems not to be the case, but its exact role is uncertain. Responsible for energy coupling to the transport system. The sequence is that of Cytochrome c biogenesis ATP-binding export protein CcmA 1 from Cupriavidus metallidurans (strain ATCC 43123 / DSM 2839 / NBRC 102507 / CH34) (Ralstonia metallidurans).